We begin with the raw amino-acid sequence, 251 residues long: Ditrans,polycis-undecaprenyl-diphosphate synthase ((2E,6E)-farnesyl-diphosphate specific) (251 aa).

D21 is an active-site residue. D21 is a binding site for Mg(2+). Residues 22 to 25, W26, H38, and 66 to 68 contribute to the substrate site; these read GNNR and SSE. Residue N69 is the Proton acceptor of the active site. Substrate is bound by residues W70, R72, R189, and 195–197; that span reads RIS. Mg(2+) is bound at residue E208.

It belongs to the UPP synthase family. As to quaternary structure, homodimer. It depends on Mg(2+) as a cofactor.

It carries out the reaction 8 isopentenyl diphosphate + (2E,6E)-farnesyl diphosphate = di-trans,octa-cis-undecaprenyl diphosphate + 8 diphosphate. Functionally, catalyzes the sequential condensation of isopentenyl diphosphate (IPP) with (2E,6E)-farnesyl diphosphate (E,E-FPP) to yield (2Z,6Z,10Z,14Z,18Z,22Z,26Z,30Z,34E,38E)-undecaprenyl diphosphate (di-trans,octa-cis-UPP). UPP is the precursor of glycosyl carrier lipid in the biosynthesis of bacterial cell wall polysaccharide components such as peptidoglycan and lipopolysaccharide. This is Ditrans,polycis-undecaprenyl-diphosphate synthase ((2E,6E)-farnesyl-diphosphate specific) from Pseudomonas syringae pv. tomato (strain ATCC BAA-871 / DC3000).